Reading from the N-terminus, the 297-residue chain is Succinate dehydrogenase [ubiquinone] iron-sulfur subunit, mitochondrial (297 aa).

Positions 47–140 (KKFEIYRWNP…SLKVYPLPHM (94 aa)) constitute a 2Fe-2S ferredoxin-type domain. Residues Cys100, Cys105, Cys108, and Cys120 each coordinate [2Fe-2S] cluster. Residues 185–215 (DRSKLDGLYECILCACCSTSCPSYWWNAEKY) enclose the 4Fe-4S ferredoxin-type domain. The [4Fe-4S] cluster site is built by Cys195, Cys198, and Cys201. Residue Cys205 participates in [3Fe-4S] cluster binding. An a ubiquinone-binding site is contributed by Trp210. [3Fe-4S] cluster contacts are provided by Cys252 and Cys258. Cys262 provides a ligand contact to [4Fe-4S] cluster.

The protein belongs to the succinate dehydrogenase/fumarate reductase iron-sulfur protein family. Component of complex II composed of four subunits: a flavoprotein (FP), an iron-sulfur protein (IP), and a cytochrome b composed of a large and a small subunit. It depends on [2Fe-2S] cluster as a cofactor. [3Fe-4S] cluster serves as cofactor. [4Fe-4S] cluster is required as a cofactor. As to expression, most abundant in the adult thorax and low in abdominal tissues.

The protein localises to the mitochondrion inner membrane. It catalyses the reaction a quinone + succinate = fumarate + a quinol. Its pathway is carbohydrate metabolism; tricarboxylic acid cycle; fumarate from succinate (eukaryal route): step 1/1. Its function is as follows. Iron-sulfur protein (IP) subunit of succinate dehydrogenase (SDH) that is involved in complex II of the mitochondrial electron transport chain and is responsible for transferring electrons from succinate to ubiquinone (coenzyme Q). The sequence is that of Succinate dehydrogenase [ubiquinone] iron-sulfur subunit, mitochondrial (SdhB) from Drosophila melanogaster (Fruit fly).